A 550-amino-acid chain; its full sequence is Small ribosomal subunit protein uS3m (550 aa).

Residues 112 to 133 (NDDTEEERNEVGGRGAGKRVES) are disordered.

The protein belongs to the universal ribosomal protein uS3 family.

The protein localises to the mitochondrion. The sequence is that of Small ribosomal subunit protein uS3m (RPS3) from Oenothera berteroana (Bertero's evening primrose).